The following is a 348-amino-acid chain: Dihydroorotase (348 aa).

Positions 14 and 16 each coordinate Zn(2+). Substrate is bound by residues 16 to 18 and N42; that span reads HLR. The Zn(2+) site is built by K100, H137, and H175. Residue K100 is modified to N6-carboxylysine. H137 provides a ligand contact to substrate. Substrate is bound at residue L220. Position 248 (D248) interacts with Zn(2+). The active site involves D248. The substrate site is built by H252 and A264.

It belongs to the metallo-dependent hydrolases superfamily. DHOase family. Class II DHOase subfamily. As to quaternary structure, homodimer. It depends on Zn(2+) as a cofactor.

It carries out the reaction (S)-dihydroorotate + H2O = N-carbamoyl-L-aspartate + H(+). The protein operates within pyrimidine metabolism; UMP biosynthesis via de novo pathway; (S)-dihydroorotate from bicarbonate: step 3/3. Functionally, catalyzes the reversible cyclization of carbamoyl aspartate to dihydroorotate. The protein is Dihydroorotase of Pseudomonas putida (strain ATCC 47054 / DSM 6125 / CFBP 8728 / NCIMB 11950 / KT2440).